A 216-amino-acid chain; its full sequence is Ribosomal RNA small subunit methyltransferase G (216 aa).

S-adenosyl-L-methionine is bound by residues Gly-83, Met-88, 134–135, and Arg-149; that span reads VE.

Belongs to the methyltransferase superfamily. RNA methyltransferase RsmG family.

The protein localises to the cytoplasm. The enzyme catalyses guanosine(527) in 16S rRNA + S-adenosyl-L-methionine = N(7)-methylguanosine(527) in 16S rRNA + S-adenosyl-L-homocysteine. Functionally, specifically methylates the N7 position of guanine in position 527 of 16S rRNA. In Pseudomonas entomophila (strain L48), this protein is Ribosomal RNA small subunit methyltransferase G.